Consider the following 130-residue polypeptide: UPF0102 protein Cthe_0758 (130 aa).

This sequence belongs to the UPF0102 family.

The sequence is that of UPF0102 protein Cthe_0758 from Acetivibrio thermocellus (strain ATCC 27405 / DSM 1237 / JCM 9322 / NBRC 103400 / NCIMB 10682 / NRRL B-4536 / VPI 7372) (Clostridium thermocellum).